Consider the following 284-residue polypeptide: MMDDSLRVSILSEALPYIQRFSGRKIVVKYGGSIMEDEKLKEAFFRDIALLSSVGVCPVVIHGGGPEINRWLNKLEISPKFENGLRVTDEKTMEIVEMVLMGRVNKQIVRGINKTGSLAVGISGLDGNLIQSRELGDGSHGLVGEVTQINPELLDPLIAKGYIPVISSIGSTADGISHNINADFVAGEVAAAINAEKLILLTDTPGILKEGDNPNSLVKQINLKDARKFIEKNIVSNGMLPKTECCIRALAQGVKAAHIIDGRIEHSLLLEIFTNSGIGTMINA.

Residues 64-65 (GG), arginine 86, and asparagine 179 each bind substrate.

The protein belongs to the acetylglutamate kinase family. ArgB subfamily.

Its subcellular location is the cytoplasm. It carries out the reaction N-acetyl-L-glutamate + ATP = N-acetyl-L-glutamyl 5-phosphate + ADP. It participates in amino-acid biosynthesis; L-arginine biosynthesis; N(2)-acetyl-L-ornithine from L-glutamate: step 2/4. Its function is as follows. Catalyzes the ATP-dependent phosphorylation of N-acetyl-L-glutamate. The sequence is that of Acetylglutamate kinase from Prochlorococcus marinus subsp. pastoris (strain CCMP1986 / NIES-2087 / MED4).